The sequence spans 324 residues: Galactosylgalactosylxylosylprotein 3-beta-glucuronosyltransferase 2 (324 aa).

The Cytoplasmic segment spans residues 1 to 2 (MK). A helical; Signal-anchor for type II membrane protein membrane pass occupies residues 3–23 (SALCSRFFILLPWILIVIIML). Topologically, residues 24-324 (DVDPRRPAPQ…YHLDTVNIEV (301 aa)) are lumenal. Residues 50-78 (SRVPLRRSSPGRDAAEKRNESRPQLQPEP) are disordered. An N-linked (GlcNAc...) asparagine glycan is attached at N68. Residues 88–90 (PTY), D119, R156, R161, and 186–188 (DDD) each bind UDP-alpha-D-glucuronate. D188 contributes to the Mn(2+) binding site. Positions 235–244 (WREDRPFAID) are interaction with galactose moiety of substrate glycoprotein. The active-site Proton donor/acceptor is E274. The N-linked (GlcNAc...) asparagine glycan is linked to N293. A UDP-alpha-D-glucuronate-binding site is contributed by 301–303 (HTR).

The protein belongs to the glycosyltransferase 43 family. As to quaternary structure, homodimer. Mn(2+) is required as a cofactor. In terms of tissue distribution, expressed in brain, but not in liver and kidney.

Its subcellular location is the golgi apparatus membrane. It catalyses the reaction 3-O-(beta-D-galactosyl-(1-&gt;3)-beta-D-galactosyl-(1-&gt;4)-beta-D-xylosyl)-L-seryl-[protein] + UDP-alpha-D-glucuronate = 3-O-(beta-D-GlcA-(1-&gt;3)-beta-D-Gal-(1-&gt;3)-beta-D-Gal-(1-&gt;4)-beta-D-Xyl)-L-seryl-[protein] + UDP + H(+). Its pathway is protein modification; protein glycosylation. Its function is as follows. Involved in the biosynthesis of L2/HNK-1 carbohydrate epitope on both glycolipids and glycoproteins. This Mus musculus (Mouse) protein is Galactosylgalactosylxylosylprotein 3-beta-glucuronosyltransferase 2 (B3gat2).